We begin with the raw amino-acid sequence, 194 residues long: Putative 3-methyladenine DNA glycosylase (194 aa).

Belongs to the DNA glycosylase MPG family.

This is Putative 3-methyladenine DNA glycosylase from Synechococcus elongatus (strain ATCC 33912 / PCC 7942 / FACHB-805) (Anacystis nidulans R2).